The sequence spans 107 residues: uncharacterized protein (107 aa).

Residues 37-59 traverse the membrane as a helical segment; that stretch reads MVFSFLTVMPGDFIKCLFLRFFV.

The protein localises to the membrane. This is an uncharacterized protein from Saccharomyces cerevisiae (strain ATCC 204508 / S288c) (Baker's yeast).